Here is a 258-residue protein sequence, read N- to C-terminus: Global transcriptional regulator CodY (258 aa).

Positions 1-156 (MSILLNKTRK…SATIVGLEIL (156 aa)) are GAF domain. The H-T-H motif DNA-binding region spans 204–223 (ASKIADKVGITRSVIVNALR).

The protein belongs to the CodY family.

It is found in the cytoplasm. Its function is as follows. DNA-binding global transcriptional regulator which is involved in the adaptive response to starvation and acts by directly or indirectly controlling the expression of numerous genes in response to nutrient availability. During rapid exponential growth, CodY is highly active and represses genes whose products allow adaptation to nutrient depletion. This chain is Global transcriptional regulator CodY, found in Clostridium acetobutylicum (strain ATCC 824 / DSM 792 / JCM 1419 / IAM 19013 / LMG 5710 / NBRC 13948 / NRRL B-527 / VKM B-1787 / 2291 / W).